We begin with the raw amino-acid sequence, 367 residues long: Probable butyrate kinase (367 aa).

The protein belongs to the acetokinase family.

The protein resides in the cytoplasm. The enzyme catalyses butanoate + ATP = butanoyl phosphate + ADP. In Bacillus cereus (strain ATCC 14579 / DSM 31 / CCUG 7414 / JCM 2152 / NBRC 15305 / NCIMB 9373 / NCTC 2599 / NRRL B-3711), this protein is Probable butyrate kinase.